The sequence spans 223 residues: Transcription factor bHLH75 (223 aa).

The disordered stretch occupies residues Phe-58 to Asp-100. Residues Gln-110 to Leu-160 enclose the bHLH domain.

In terms of assembly, homodimer. As to expression, expressed in leaves, stems, and flowers.

The protein resides in the nucleus. This is Transcription factor bHLH75 (BHLH75) from Arabidopsis thaliana (Mouse-ear cress).